Here is a 172-residue protein sequence, read N- to C-terminus: Peptide methionine sulfoxide reductase MsrA (172 aa).

Residue C14 is part of the active site.

It belongs to the MsrA Met sulfoxide reductase family.

It catalyses the reaction L-methionyl-[protein] + [thioredoxin]-disulfide + H2O = L-methionyl-(S)-S-oxide-[protein] + [thioredoxin]-dithiol. The catalysed reaction is [thioredoxin]-disulfide + L-methionine + H2O = L-methionine (S)-S-oxide + [thioredoxin]-dithiol. Functionally, has an important function as a repair enzyme for proteins that have been inactivated by oxidation. Catalyzes the reversible oxidation-reduction of methionine sulfoxide in proteins to methionine. This Streptomyces coelicolor (strain ATCC BAA-471 / A3(2) / M145) protein is Peptide methionine sulfoxide reductase MsrA.